The following is a 152-amino-acid chain: Protein SprT-like (152 aa).

The SprT-like domain maps to 7 to 148 (QRLVEEVSLQ…GKCKGKLILI (142 aa)). Residue His-67 participates in Zn(2+) binding. Glu-68 is a catalytic residue. Residue His-71 participates in Zn(2+) binding.

Belongs to the SprT family. It depends on Zn(2+) as a cofactor.

The protein resides in the cytoplasm. In Bacillus cereus (strain ATCC 10987 / NRS 248), this protein is Protein SprT-like.